The chain runs to 241 residues: Ras-like protein 1 (241 aa).

Residues 17 to 22, 33 to 39, 63 to 64, 138 to 141, and 168 to 170 each bind GTP; these read GVGKTA, VETYDPT, AG, NKSD, and SAK. The Effector region signature appears at 36-44; that stretch reads YDPTIEDSY. Residues 190 to 241 form a disordered region; sequence RQQASRPSLPGNSRTKTGGMGKSESFYQSDGKRGSRKDGEKHRSKPIKCVIL. A compositionally biased stretch (polar residues) spans 191-205; sequence QQASRPSLPGNSRTK. Residues 219–230 show a composition bias toward basic and acidic residues; it reads DGKRGSRKDGEK. Residue C238 is modified to Cysteine methyl ester. C238 carries the S-farnesyl cysteine lipid modification. The propeptide at 239–241 is removed in mature form; it reads VIL.

It belongs to the small GTPase superfamily. Ras family. Interacts with farnesyltransferase beta subunit RAM1.

It localises to the cell membrane. Alternates between an inactive form bound to GDP and an active form bound to GTP. Activated by a guanine nucleotide-exchange factor (GEF) and inactivated by a GTPase-activating protein (GAP). Modulates the activity of the adenylate cyclase catalytic subunit and therefore affects the biosynthesis of cyclic-AMP. Plays a role in both surface attachment and surface recognition of appressoria, a highly specialized infection structure for plant penetration. Regulates appressorium formation by coordinated regulation of cAMP signaling and Pmk1 MAPK pathways. This Pyricularia oryzae (strain 70-15 / ATCC MYA-4617 / FGSC 8958) (Rice blast fungus) protein is Ras-like protein 1.